Consider the following 451-residue polypeptide: Zinc finger MYND domain-containing protein 10 homolog (451 aa).

Positions 412, 415, 423, 426, 432, 436, 444, and 448 each coordinate Zn(2+). The MYND-type zinc finger occupies 412-448 (CATCQAKAKKKCACCKKVHYCSRDCQLKDWPQHKLVC).

It belongs to the ZMYND10 family. As to expression, specifically expressed in cells with flagella and motile cilia: chordotonal sensory neurons and sperm.

The protein resides in the cytoplasm. The protein localises to the cell projection. Its subcellular location is the cilium. It is found in the dynein axonemal particle. Functionally, plays a role in axonemal structure organization and motility. May be involved in axonemal pre-assembly of inner and outer dynein arms (IDA and ODA, respectively) for proper axoneme building for cilia motility. The polypeptide is Zinc finger MYND domain-containing protein 10 homolog (Drosophila melanogaster (Fruit fly)).